Consider the following 207-residue polypeptide: Cytochrome c oxidase subunit 3 (207 aa).

Helical transmembrane passes span 28-48 (FLGFWLFLGGETVLFASLFAT), 70-90 (VVFMATMLLLTSSLTSVYAIY), 102-122 (LWFGITVLLGAGFLGLEIYEF), 144-164 (LVGTHGSHVAFGLLWILTLMI), and 186-206 (WHFIDVVWVFIFTVVYLMGMV).

Belongs to the cytochrome c oxidase subunit 3 family.

It is found in the cell membrane. It carries out the reaction 4 Fe(II)-[cytochrome c] + O2 + 8 H(+)(in) = 4 Fe(III)-[cytochrome c] + 2 H2O + 4 H(+)(out). The polypeptide is Cytochrome c oxidase subunit 3 (ctaE) (Bacillus sp. (strain PS3)).